An 83-amino-acid chain; its full sequence is Mu-theraphotoxin-Hhn2m (83 aa).

Positions 1-21 (MKASMFLALAGLVLLFVVGYA) are cleaved as a signal peptide. Residues 22-48 (SESEEKEFPIELLSKIFAVDVFKGEER) constitute a propeptide that is removed on maturation. 3 disulfide bridges follow: Cys50–Cys65, Cys57–Cys70, and Cys64–Cys77. Leucine amide is present on Leu81.

This sequence belongs to the neurotoxin 10 (Hwtx-1) family. 15 (Hntx-3) subfamily. As to quaternary structure, monomer. In terms of tissue distribution, expressed by the venom gland.

It localises to the secreted. Its function is as follows. Lethal neurotoxin. Selectively blocks tetrodotoxin-sensitive voltage-gated sodium channels (Nav). Does not affect tetrodotoxin-resistant voltage-gated sodium channels or calcium channels. In Cyriopagopus hainanus (Chinese bird spider), this protein is Mu-theraphotoxin-Hhn2m.